We begin with the raw amino-acid sequence, 2493 residues long: Non-reducing polyketide synthase pkiA (2493 aa).

The segment at 129 to 243 is N-terminal acylcarrier protein transacylase domain (SAT); sequence PLLMMTHFVQ…VQYDENRATI (115 aa). C160 functions as the Nucleophile; for transacylase activity in the catalytic mechanism. H274 acts as the Proton donor/acceptor; for transacylase activity in catalysis. The Ketosynthase family 3 (KS3) domain maps to 401-818; it reads ETDIAIVGMA…GSNASMVITQ (418 aa). Active-site for beta-ketoacyl synthase activity residues include C567, H702, and H741. Residues 926-1261 are malonyl-CoA:ACP transacylase (MAT); the sequence is CFGGQVGRSI…EYAPLLLPPY (336 aa). Residues 1259–1387 are N-terminal hotdog fold; it reads PPYQFERTRH…AHISMHDVRC (129 aa). In terms of domain architecture, PKS/mFAS DH spans 1259–1562; sequence PPYQFERTRH…YSRVAKSLFT (304 aa). The active-site Proton acceptor; for dehydratase activity is H1291. Residues 1297–1558 form a product template (PT) domain region; that stretch reads APIAPATLLL…LGLRYSRVAK (262 aa). The segment at 1415 to 1562 is C-terminal hotdog fold; it reads VDDILQGRNV…YSRVAKSLFT (148 aa). D1471 functions as the Proton donor; for dehydratase activity in the catalytic mechanism. Positions 1588 to 1662 constitute a Carrier domain; that stretch reads KDLVSRVKAV…DLVQAVQSAL (75 aa). Residue S1622 is modified to O-(pantetheine 4'-phosphoryl)serine. Residues 1822–2063 form a methyltransferase (CMeT) domain region; the sequence is REYPEYGGAS…YGHVDWTDGE (242 aa). Residues 2128 to 2366 are NADPH-binding domain; that stretch reads VTGATGSLGS…TPVDVAARII (239 aa).

It depends on pantetheine 4'-phosphate as a cofactor.

It catalyses the reaction decanoyl-[ACP] + 4 malonyl-CoA + AH2 + S-adenosyl-L-methionine + 3 H(+) = 2,4-dihydroxy-3-methyl-6-(2-oxoundecyl)benzaldehyde + holo-[ACP] + A + S-adenosyl-L-homocysteine + 4 CO2 + 4 CoA + H2O. It participates in secondary metabolite biosynthesis. Its function is as follows. Non-reducing polyketide synthase; part of the pki gene cluster that mediates the biosynthesis of 2,4-dihydroxy-3-methyl-6-(2-oxoundecyl)benzaldehyde. The first step in the pathway is the generation of the decanoyl starter unit by the FAS composed of subunits pkiB and pkiC, which is then transferred directly from the FAS to the SAT domain of the non-reducing polyketide synthase pkiA. PkiA condenses the decanoyyl starter unit with 4 malonyl-CoA units and performs one methylation step to yield 2,4-dihydroxy-3-methyl-6-(2-oxoundecyl)benzaldehyde. The polypeptide is Non-reducing polyketide synthase pkiA (Emericella nidulans (strain FGSC A4 / ATCC 38163 / CBS 112.46 / NRRL 194 / M139) (Aspergillus nidulans)).